A 262-amino-acid chain; its full sequence is uncharacterized protein (262 aa).

7 helical membrane passes run 42–62 (IAKFNTIMYLVPYIITYTVLN), 71–91 (IINIVYLFVNVISGLFHLLYF), 115–135 (IGLAIVSFVYQLSMYIIMELI), 145–165 (VVSYLIKFIILTLYHSFCCFN), 185–205 (LWAYYLGYGTIASLMYIYSNH), 206–226 (PLMIYTYNIYMSILIILPFMI), and 235–255 (AYPSINLKIFSIIVGYFNYAI).

The protein resides in the membrane. This is an uncharacterized protein from Acanthamoeba polyphaga mimivirus (APMV).